A 404-amino-acid chain; its full sequence is Cysteine desulfurase IscS (404 aa).

Residues 75–76 (AT), N155, Q183, and 203–205 (SAH) each bind pyridoxal 5'-phosphate. K206 bears the N6-(pyridoxal phosphate)lysine mark. Position 243 (T243) interacts with pyridoxal 5'-phosphate. Residue C328 is the Cysteine persulfide intermediate of the active site. C328 contacts [2Fe-2S] cluster.

The protein belongs to the class-V pyridoxal-phosphate-dependent aminotransferase family. NifS/IscS subfamily. As to quaternary structure, homodimer. Forms a heterotetramer with IscU, interacts with other sulfur acceptors. The cofactor is pyridoxal 5'-phosphate.

Its subcellular location is the cytoplasm. The enzyme catalyses (sulfur carrier)-H + L-cysteine = (sulfur carrier)-SH + L-alanine. The protein operates within cofactor biosynthesis; iron-sulfur cluster biosynthesis. Its function is as follows. Master enzyme that delivers sulfur to a number of partners involved in Fe-S cluster assembly, tRNA modification or cofactor biosynthesis. Catalyzes the removal of elemental sulfur atoms from cysteine to produce alanine. Functions as a sulfur delivery protein for Fe-S cluster synthesis onto IscU, an Fe-S scaffold assembly protein, as well as other S acceptor proteins. The sequence is that of Cysteine desulfurase IscS from Tolumonas auensis (strain DSM 9187 / NBRC 110442 / TA 4).